We begin with the raw amino-acid sequence, 312 residues long: Phosphoribosylaminoimidazole-succinocarboxamide synthase (312 aa).

Belongs to the SAICAR synthetase family.

It catalyses the reaction 5-amino-1-(5-phospho-D-ribosyl)imidazole-4-carboxylate + L-aspartate + ATP = (2S)-2-[5-amino-1-(5-phospho-beta-D-ribosyl)imidazole-4-carboxamido]succinate + ADP + phosphate + 2 H(+). It participates in purine metabolism; IMP biosynthesis via de novo pathway; 5-amino-1-(5-phospho-D-ribosyl)imidazole-4-carboxamide from 5-amino-1-(5-phospho-D-ribosyl)imidazole-4-carboxylate: step 1/2. The sequence is that of Phosphoribosylaminoimidazole-succinocarboxamide synthase from Legionella pneumophila (strain Lens).